A 142-amino-acid chain; its full sequence is Large ribosomal subunit protein uL11 (142 aa).

Belongs to the universal ribosomal protein uL11 family. Part of the ribosomal stalk of the 50S ribosomal subunit. Interacts with L10 and the large rRNA to form the base of the stalk. L10 forms an elongated spine to which L12 dimers bind in a sequential fashion forming a multimeric L10(L12)X complex. In terms of processing, one or more lysine residues are methylated.

Forms part of the ribosomal stalk which helps the ribosome interact with GTP-bound translation factors. In Mycolicibacterium gilvum (strain PYR-GCK) (Mycobacterium gilvum (strain PYR-GCK)), this protein is Large ribosomal subunit protein uL11.